Here is a 156-residue protein sequence, read N- to C-terminus: Small ribosomal subunit protein uS7 (156 aa).

The protein belongs to the universal ribosomal protein uS7 family. Part of the 30S ribosomal subunit. Contacts proteins S9 and S11.

Its function is as follows. One of the primary rRNA binding proteins, it binds directly to 16S rRNA where it nucleates assembly of the head domain of the 30S subunit. Is located at the subunit interface close to the decoding center, probably blocks exit of the E-site tRNA. In Thermosynechococcus vestitus (strain NIES-2133 / IAM M-273 / BP-1), this protein is Small ribosomal subunit protein uS7.